We begin with the raw amino-acid sequence, 200 residues long: Dephospho-CoA kinase (200 aa).

The DPCK domain maps to V4–D200. Residue A12 to T17 coordinates ATP.

Belongs to the CoaE family.

It is found in the cytoplasm. The enzyme catalyses 3'-dephospho-CoA + ATP = ADP + CoA + H(+). Its pathway is cofactor biosynthesis; coenzyme A biosynthesis; CoA from (R)-pantothenate: step 5/5. Its function is as follows. Catalyzes the phosphorylation of the 3'-hydroxyl group of dephosphocoenzyme A to form coenzyme A. The chain is Dephospho-CoA kinase from Bacillus cereus (strain ZK / E33L).